A 295-amino-acid chain; its full sequence is MRHSVARPTRLPRRLSPFWDPATCKNLEGGAGEVVRGRDPRRLRTSRSTEILGEDLAGPSAGAAARPAAPPPQPREPGAPGLRRAPPRTRMDSSGLGPCSEAPLHTSAGLSGRNLRAAGGVLPVDLERERAALCARQSGHGPPAVRWLLGSRGAESGGLARRRVAAEHAQPSANLVCRSALETSAFPPSKPKSPRGRVRARSSDGRLRHPAWRAGSGGRGGRGPSAELASRYWGRRRALPGAADLRPKGARADDRRPLRAGRKLHLPEAARLPGNVGKSGEPHKAGEVGNHPRDS.

Basic residues predominate over residues 1–13; sequence MRHSVARPTRLPR. 2 disordered regions span residues 1 to 111 and 183 to 295; these read MRHS…AGLS and TSAF…PRDS. Residues 57 to 67 show a composition bias toward low complexity; that stretch reads AGPSAGAAARP. Pro residues predominate over residues 68 to 77; the sequence is AAPPPQPREP. Basic and acidic residues-rich tracts occupy residues 245 to 257 and 280 to 295; these read LRPK…DRRP and GEPH…PRDS.

This is an uncharacterized protein from Homo sapiens (Human).